The following is a 476-amino-acid chain: Cysteine--tRNA ligase (476 aa).

Cys-29 serves as a coordination point for Zn(2+). The short motif at 31–41 (PTVYDYPHLGH) is the 'HIGH' region element. Zn(2+)-binding residues include Cys-209, His-234, and Glu-238. The short motif at 266–270 (KMSKS) is the 'KMSKS' region element. Residue Lys-269 coordinates ATP.

Belongs to the class-I aminoacyl-tRNA synthetase family. Requires Zn(2+) as cofactor.

The protein localises to the cytoplasm. The enzyme catalyses tRNA(Cys) + L-cysteine + ATP = L-cysteinyl-tRNA(Cys) + AMP + diphosphate. The polypeptide is Cysteine--tRNA ligase (cysS) (Pyrococcus horikoshii (strain ATCC 700860 / DSM 12428 / JCM 9974 / NBRC 100139 / OT-3)).